Reading from the N-terminus, the 254-residue chain is Sec-independent protein translocase protein TatC (254 aa).

6 consecutive transmembrane segments (helical) span residues 40 to 60, 82 to 104, 125 to 145, 172 to 192, 210 to 230, and 233 to 253; these read IFLS…FVKP, FFFV…FILY, VVLG…YALI, FVLL…IQVV, FVIL…DPLT, and LLAG…RLLG.

Belongs to the TatC family. Forms a complex with TatA.

It is found in the cell inner membrane. Its function is as follows. Part of the twin-arginine translocation (Tat) system that transports large folded proteins containing a characteristic twin-arginine motif in their signal peptide across membranes. The protein is Sec-independent protein translocase protein TatC of Synechocystis sp. (strain ATCC 27184 / PCC 6803 / Kazusa).